A 156-amino-acid chain; its full sequence is Small ribosomal subunit protein uS7 (156 aa).

This sequence belongs to the universal ribosomal protein uS7 family. Part of the 30S ribosomal subunit. Contacts proteins S9 and S11.

Its function is as follows. One of the primary rRNA binding proteins, it binds directly to 16S rRNA where it nucleates assembly of the head domain of the 30S subunit. Is located at the subunit interface close to the decoding center, probably blocks exit of the E-site tRNA. The sequence is that of Small ribosomal subunit protein uS7 from Magnetococcus marinus (strain ATCC BAA-1437 / JCM 17883 / MC-1).